The primary structure comprises 466 residues: Arginine biosynthesis bifunctional protein ArgJ, mitochondrial (466 aa).

Residues 1 to 9 constitute a mitochondrion transit peptide; it reads MSSLVLKRF. T183, K209, T232, E320, N461, and S466 together coordinate substrate. T232 serves as the catalytic Nucleophile.

Belongs to the ArgJ family. As to quaternary structure, heterodimer of an alpha and a beta chain. In terms of processing, the alpha and beta chains are autoproteolytically processed from a single precursor protein within the mitochondrion.

It is found in the mitochondrion matrix. It catalyses the reaction N(2)-acetyl-L-ornithine + L-glutamate = N-acetyl-L-glutamate + L-ornithine. It carries out the reaction L-glutamate + acetyl-CoA = N-acetyl-L-glutamate + CoA + H(+). The protein operates within amino-acid biosynthesis; L-arginine biosynthesis; L-ornithine and N-acetyl-L-glutamate from L-glutamate and N(2)-acetyl-L-ornithine (cyclic): step 1/1. It participates in amino-acid biosynthesis; L-arginine biosynthesis; N(2)-acetyl-L-ornithine from L-glutamate: step 1/4. In terms of biological role, catalyzes two activities which are involved in the cyclic version of arginine biosynthesis: the synthesis of acetylglutamate from glutamate and acetyl-CoA, and of ornithine by transacetylation between acetylornithine and glutamate. The chain is Arginine biosynthesis bifunctional protein ArgJ, mitochondrial from Laccaria bicolor (strain S238N-H82 / ATCC MYA-4686) (Bicoloured deceiver).